The sequence spans 1088 residues: RNA-directed RNA polymerase (1088 aa).

The RdRp catalytic domain maps to 501 to 687; the sequence is LSYGDVTRFL…AKRYIAGGKI (187 aa).

Belongs to the reoviridae RNA-directed RNA polymerase family. As to quaternary structure, interacts with VP3 (Potential). Interacts with VP2; this interaction activates VP1. Interacts with NSP5; this interaction is probably necessary for the formation of functional virus factories. Interacts with NSP2; this interaction is weak. The cofactor is Mg(2+).

It is found in the virion. It catalyses the reaction RNA(n) + a ribonucleoside 5'-triphosphate = RNA(n+1) + diphosphate. Its function is as follows. RNA-directed RNA polymerase that is involved in both transcription and genome replication. Together with VP3 capping enzyme, forms an enzyme complex positioned near the channels situated at each of the five-fold vertices of the core. Following infection, the outermost layer of the virus is lost, leaving a double-layered particle (DLP) made up of the core and VP6 shell. VP1 then catalyzes the transcription of fully conservative plus-strand genomic RNAs that are extruded through the DLP's channels into the cytoplasm where they function as mRNAs for translation of viral proteins. One copy of each of the viral (+)RNAs is also recruited during core assembly, together with newly synthesized polymerase complexes and VP2. The polymerase of these novo-formed particles catalyzes the synthesis of complementary minus-strands leading to dsRNA formation. To do so, the polymerase specifically recognizes and binds 4 bases 5'-UGUG-3' in the conserved 3'-sequence of plus-strand RNA templates. VP2 presumably activates the autoinhibited VP1-RNA complex to coordinate packaging and genome replication. Once dsRNA synthesis is complete, the polymerase switches to the transcriptional mode, thus providing secondary transcription. The chain is RNA-directed RNA polymerase from Homo sapiens (Human).